Consider the following 35-residue polypeptide: Photosystem II reaction center protein T (35 aa).

Residues 3–23 traverse the membrane as a helical segment; that stretch reads ALVYTFLLVGTLGIIFFAIFF.

This sequence belongs to the PsbT family. PSII is composed of 1 copy each of membrane proteins PsbA, PsbB, PsbC, PsbD, PsbE, PsbF, PsbH, PsbI, PsbJ, PsbK, PsbL, PsbM, PsbT, PsbY, PsbZ, Psb30/Ycf12, at least 3 peripheral proteins of the oxygen-evolving complex and a large number of cofactors. It forms dimeric complexes.

Its subcellular location is the plastid. It is found in the chloroplast thylakoid membrane. Functionally, found at the monomer-monomer interface of the photosystem II (PS II) dimer, plays a role in assembly and dimerization of PSII. PSII is a light-driven water plastoquinone oxidoreductase, using light energy to abstract electrons from H(2)O, generating a proton gradient subsequently used for ATP formation. This is Photosystem II reaction center protein T from Chara vulgaris (Common stonewort).